The following is a 116-amino-acid chain: Large ribosomal subunit protein uL18 (116 aa).

The protein belongs to the universal ribosomal protein uL18 family. In terms of assembly, part of the 50S ribosomal subunit; part of the 5S rRNA/L5/L18/L25 subcomplex. Contacts the 5S and 23S rRNAs.

Its function is as follows. This is one of the proteins that bind and probably mediate the attachment of the 5S RNA into the large ribosomal subunit, where it forms part of the central protuberance. This is Large ribosomal subunit protein uL18 from Shewanella sp. (strain ANA-3).